The primary structure comprises 577 residues: Aspartate--tRNA(Asp/Asn) ligase (577 aa).

Glutamate 171 lines the L-aspartate pocket. The interval 195–198 (QLFK) is aspartate. Arginine 217 contacts L-aspartate. Residues 217 to 219 (RDE) and glutamine 226 contribute to the ATP site. An L-aspartate-binding site is contributed by histidine 444. Residue glutamate 474 coordinates ATP. Arginine 481 is an L-aspartate binding site. Residue 526 to 529 (GFDR) participates in ATP binding.

Belongs to the class-II aminoacyl-tRNA synthetase family. Type 1 subfamily. Homodimer.

It is found in the cytoplasm. The enzyme catalyses tRNA(Asx) + L-aspartate + ATP = L-aspartyl-tRNA(Asx) + AMP + diphosphate. In terms of biological role, aspartyl-tRNA synthetase with relaxed tRNA specificity since it is able to aspartylate not only its cognate tRNA(Asp) but also tRNA(Asn). Is 1.7 times more efficient at aminoacylating tRNA(Asp) over tRNA(Asn). Reaction proceeds in two steps: L-aspartate is first activated by ATP to form Asp-AMP and then transferred to the acceptor end of tRNA(Asp/Asn). This Helicobacter pylori (strain ATCC 700392 / 26695) (Campylobacter pylori) protein is Aspartate--tRNA(Asp/Asn) ligase.